The sequence spans 623 residues: MRLLLWWVLVLSLFLDPLRAVEEHETDAVDLFLIFNQINQLNQVIETYKKNPERSAEISLYNTQKNDLIKSLTSKVLNERDKIGIDINQNLKEQEKIKKRLSKSIKGDDFYTFMKDRLSLDILLIDETLYRFIDKIRSSIDIFSEQKDVESISDAFLLRLGQFKLYTFPKNLGNVKMHELEQMFSDYELRLNTYTEVLRYIKNHPKEVLPKNLIMEVNMDFVLNKISKVLPFTAHSLQVSKIALALMILALLLGLRKLITWLLALLLDRIFEIMQRNKKMHVNVQSSIVSPVSVFLALFSCDVALDIFYYPNASPPKVSMWVGAVYIMLLAWLVIALFKGYGEALVTNVATKSTHNFRKEVINLILKVVYFLIFIVALLGVLKQLGFNVSAIIASLGIGGLAVALAVKDVLANFFASVILLLDNSFSQGDWIVCGEVEGTVVEMGLRRTTIRAFDNALLSVPNSELAGKPIRNWSRRKVGRRIKMEIGLTYSSSQSALQLCVKDIKEMLENHPKIANGADSALQNASDYRYMFKKDIVSIDDFLGYKNNLFVFLDQFADSSINILVYCFSKTVVWEEWLEVKEDVMLKIMGIVEKHHLSFAFPSQSLYVESLPEVSLKEGAKI.

Transmembrane regions (helical) follow at residues 242–262 (IALA…ITWL), 288–308 (IVSP…LDIF), 318–338 (VSMW…IALF), 361–381 (VINL…LLGV), and 387–407 (FNVS…ALAV).

Belongs to the MscS (TC 1.A.23) family.

It localises to the cell membrane. This is an uncharacterized protein from Helicobacter pylori (strain J99 / ATCC 700824) (Campylobacter pylori J99).